The following is a 280-amino-acid chain: Myb family transcription factor PHL11 (280 aa).

The region spanning 20–80 (RDPKPRLRWT…HLQKYRLGQQ (61 aa)) is the HTH myb-type domain. The segment at residues 51–76 (PKSVLKLMGLKGLTLYHLKSHLQKYR) is a DNA-binding region (H-T-H motif). A disordered region spans residues 77 to 98 (LGQQQGKKQNRTEQNKENAGSS). Positions 129-149 (AEAMRHQVDAQQRFQEQLEVQ) are coiled coil. An LHEQLE motif is present at residues 142–147 (FQEQLE).

The protein belongs to the MYB-CC family.

The protein localises to the nucleus. The sequence is that of Myb family transcription factor PHL11 from Arabidopsis thaliana (Mouse-ear cress).